Consider the following 241-residue polypeptide: Exosome complex component RRP41 homolog (241 aa).

An N-acetylmethionine modification is found at Met1.

The protein belongs to the RNase PH family. Component of the RNA exosome complex. Interacts with RPP4.

The protein resides in the cytoplasm. It localises to the nucleus. Its subcellular location is the nucleolus. Its function is as follows. Non-catalytic component of the RNA exosome complex which has 3'-&gt;5' exoribonuclease activity and participates in a multitude of cellular RNA processing, maturation and degradation events. In vitro, is a processive phosphorolytic exonuclease and requires a single-stranded poly(A) tail on the substrate RNA for its activity. Can complement the growth defect of a yeast mutant lacking RRP41 exonuclease. Required for normal development of female gametophytes. This chain is Exosome complex component RRP41 homolog, found in Arabidopsis thaliana (Mouse-ear cress).